The primary structure comprises 903 residues: HTH-type transcriptional regulator MalT (903 aa).

39–46 (CPAGYGKT) contributes to the ATP binding site. Residues 832–897 (ELIRTSPLTQ…DAVQQAQRLL (66 aa)) form the HTH luxR-type domain. Positions 856–875 (NDQIAGELEVAATTIKTHIR) form a DNA-binding region, H-T-H motif.

Belongs to the MalT family. Monomer in solution. Oligomerizes to an active state in the presence of the positive effectors ATP and maltotriose.

With respect to regulation, activated by ATP and maltotriose, which are both required for DNA binding. Positively regulates the transcription of the maltose regulon whose gene products are responsible for uptake and catabolism of malto-oligosaccharides. Specifically binds to the promoter region of its target genes, recognizing a short DNA motif called the MalT box. The chain is HTH-type transcriptional regulator MalT from Yersinia enterocolitica serotype O:8 / biotype 1B (strain NCTC 13174 / 8081).